A 337-amino-acid polypeptide reads, in one-letter code: RAD51-associated protein 1 (337 aa).

Disordered regions lie at residues 1–69 (MVRP…PPKK) and 88–337 (LSVK…SQVR). S19 and S23 each carry phosphoserine. A compositionally biased stretch (polar residues) spans 28-38 (ISSSTPVNKSK). Residues 32–50 (TPVNKSKTVPKVLKQDKPK) form an interaction with DNA region. Residues 44–69 (LKQDKPKPNLKNLQKEEVLPTEPPKK) show a composition bias toward basic and acidic residues. Residues S103 and S107 each carry the phosphoserine modification. Residues 105 to 118 (EKSTDKQGKEKTEN) show a composition bias toward basic and acidic residues. An SIM motif motif is present at residues 138-143 (LDKITE). A compositionally biased stretch (acidic residues) spans 190–205 (SESDPDFDESKESDED). Positions 225–286 (GEKKERKSKP…PSAESKRPKW (62 aa)) are interaction with DNA. K251 is covalently cross-linked (Glycyl lysine isopeptide (Lys-Gly) (interchain with G-Cter in SUMO; alternate)). Residue K251 forms a Glycyl lysine isopeptide (Lys-Gly) (interchain with G-Cter in ubiquitin; alternate) linkage. The WVPP motif signature appears at 286-289 (WVPP). Residues 290–304 (AASGSRNSSSNALAG) are compositionally biased toward low complexity. Residues 295 to 334 (RNSSSNALAGTPAKSPSQSLRLGLSRLAPVKRLHPSATSS) form an interaction with RAD51 region. At S309 the chain carries Phosphoserine.

As to quaternary structure, monomer; elongated monodisperse monomer. Interacts (via C-terminal region) with RAD51; the interaction is direct. Interacts (via SIM motif) with WDR48/UAF1; WDR48/UAF1 and RAD51AP1 cooperate together to stimulate RAD51-mediated homologous recombination (HR). Interacts (via WVPP motif) with DMC1; the interaction is direct. Interacts with PALB2. Interacts with RAD52. In terms of processing, sumoylation with SUMO2/3 by NSMCE2/MMS21 promotes stabilization, possibly by preventing ubiquitination. Most abundantly expressed in testis. Also expressed in spleen, thymus and bone marrow. Not detected in heart, kidney or liver.

It is found in the chromosome. It localises to the nucleus. Its subcellular location is the telomere. Functionally, structure-specific DNA-binding protein involved in DNA repair by promoting RAD51-mediated homologous recombination. Acts by stimulating D-Loop formation by RAD51: specifically enhances joint molecule formation through its structure-specific DNA interaction and its interaction with RAD51. Binds single-stranded DNA (ssDNA), double-stranded DNA (dsDNA) and secondary DNA structures, such as D-loop structures: has a strong preference for branched-DNA structures that are obligatory intermediates during joint molecule formation. Cooperates with WDR48/UAF1 to stimulate RAD51-mediated homologous recombination: both WDR48/UAF1 and RAD51AP1 have coordinated role in DNA-binding during homologous recombination and DNA repair. WDR48/UAF1 and RAD51AP1 also have a coordinated role in DNA-binding to promote USP1-mediated deubiquitination of FANCD2. Also involved in meiosis by promoting DMC1-mediated homologous meiotic recombination. This chain is RAD51-associated protein 1, found in Mus musculus (Mouse).